We begin with the raw amino-acid sequence, 35 residues long: Surfactant protein C (35 aa).

2 S-palmitoyl cysteine lipidation sites follow: Cys5 and Cys6.

It is found in the secreted. It localises to the extracellular space. Its subcellular location is the surface film. Pulmonary surfactant associated proteins promote alveolar stability by lowering the surface tension at the air-liquid interface in the peripheral air spaces. This is Surfactant protein C (SFTPC) from Sus scrofa (Pig).